The following is a 687-amino-acid chain: Triadin (687 aa).

Over 1–47 (MTEITAEGNASITTTVIDNKNGSVPKSPGKVLKRTVTEDIVTTFSSP) the chain is Cytoplasmic. Residues 48–68 (AAWLLVIALIITWSAVAIVMF) form a helical membrane-spanning segment. The Lumenal segment spans residues 69–687 (DLVDYKNFSA…NSPGQKQQEQ (619 aa)). A compositionally biased stretch (acidic residues) spans 117–130 (DGDEDDEDADEDID). 3 disordered regions span residues 117-265 (DGDE…EQKD), 280-643 (GDLK…QKSP), and 660-687 (FQFPVTPVQHSGENPGKSNSPGQKQQEQ). The span at 131–265 (KGEIEEPPLK…PAVPKHEQKD (135 aa)) shows a compositional bias: basic and acidic residues. The segment covering 295 to 306 (LTASRPALSTPS) has biased composition (polar residues). A phosphoserine mark is found at S303 and S306. The span at 307-356 (LEEKEKEEKKKVEKKVTSDTKKKEKGEAKKKSEKETVIDGKGKEPGKPPE) shows a compositional bias: basic and acidic residues. Residues 357-370 (TKQTTTKLTTQAAA) are compositionally biased toward low complexity. Composition is skewed to basic and acidic residues over residues 371 to 390 (TKDEKKEDSKKMKKPPEEKP), 396 to 431 (EKKEKHIEPAKTPKKEHPAPSEKHRKAKAEQAKEEI), 442 to 459 (GKKEEKAKTVEQGKDVKP), and 466 to 501 (LKKEEKSEPQPKKEVKLETQLKKEEKSEPQVKKEAK). A glycan (N-linked (GlcNAc...) asparagine) is linked at N514. Composition is skewed to basic and acidic residues over residues 539 to 583 (TAEK…KVPP) and 594 to 630 (TRAEKRGKISKDSKDAPAPKKDKDSKDVLHSKKDKEV). Composition is skewed to polar residues over residues 631-643 (TNNVSSPKKQKSP) and 667-687 (VQHSGENPGKSNSPGQKQQEQ).

As to quaternary structure, homooligomer of variable subunit number; disulfide-linked. Interacts with CASQ1 in skeletal muscle. Interacts with CASQ2. Interacts with RYR1 in skeletal muscle. In terms of processing, phosphorylated by CaMK2. N-glycosylated. Detected in skeletal muscle (at protein level). Detected in skeletal muscle.

The protein localises to the sarcoplasmic reticulum membrane. It is found in the microsome. The protein resides in the cell membrane. Its subcellular location is the sarcolemma. Contributes to the regulation of lumenal Ca2+ release via the sarcoplasmic reticulum calcium release channels RYR1 and RYR2, a key step in triggering skeletal and heart muscle contraction. Required for normal organization of the triad junction, where T-tubules and the sarcoplasmic reticulum terminal cisternae are in close contact. Required for normal skeletal muscle strength. Plays a role in excitation-contraction coupling in the heart and in regulating the rate of heart beats. The polypeptide is Triadin (Rattus norvegicus (Rat)).